We begin with the raw amino-acid sequence, 344 residues long: Phenylalanine--tRNA ligase alpha subunit (344 aa).

Position 256 (E256) interacts with Mg(2+).

The protein belongs to the class-II aminoacyl-tRNA synthetase family. Phe-tRNA synthetase alpha subunit type 1 subfamily. As to quaternary structure, tetramer of two alpha and two beta subunits. Mg(2+) serves as cofactor.

It localises to the cytoplasm. The enzyme catalyses tRNA(Phe) + L-phenylalanine + ATP = L-phenylalanyl-tRNA(Phe) + AMP + diphosphate + H(+). The sequence is that of Phenylalanine--tRNA ligase alpha subunit (pheS) from Halalkalibacterium halodurans (strain ATCC BAA-125 / DSM 18197 / FERM 7344 / JCM 9153 / C-125) (Bacillus halodurans).